The chain runs to 293 residues: Actin-related protein 2/3 complex subunit 2 (293 aa).

The protein belongs to the ARPC2 family. As to quaternary structure, component of the Arp2/3 complex composed of arpB/Arp2, arpC/Arp3, arcA/p41-arc, arcB/p34-arc, arcC/p21-arc, arcD/p20-arc and arcE/p16-arc. Interacts with carmil (via the region between the LRR domain and COOH-terminal proline-rich domain); carmil is required for Arp2/3-dependent actin nucleation. Arp2/3 complex, MyoB, MyoC, and the alpha and beta subunits of capping protein all form a larger complex with carmil.

The protein resides in the cytoplasm. It is found in the cytoskeleton. Its subcellular location is the cell projection. The protein localises to the cytosol. It localises to the cell cortex. The protein resides in the pseudopodium. Functionally, functions as a component of the Arp2/3 complex which is involved in regulation of actin polymerization and together with an activating nucleation-promoting factor (NPF) mediates the formation of branched actin networks. Seems to contact the pointed end of the daughter actin filament. The Arp2/3 complex is involved in organizing the actin system in cell motility and chemotaxis, in phagocytosis and macropinocytosis, at late steps of endosome processing, and in mitosis. In concert with a group of other proteins, the Arp2/3 complex plays a general role in the rapid activation and adaptation of the actin system to its multiple functions. This is Actin-related protein 2/3 complex subunit 2 (arcB) from Dictyostelium discoideum (Social amoeba).